A 487-amino-acid chain; its full sequence is Cytochrome P450 2C21 (487 aa).

Position 432 (C432) interacts with heme.

This sequence belongs to the cytochrome P450 family. It depends on heme as a cofactor. Liver.

Its subcellular location is the endoplasmic reticulum membrane. It is found in the microsome membrane. It carries out the reaction an organic molecule + reduced [NADPH--hemoprotein reductase] + O2 = an alcohol + oxidized [NADPH--hemoprotein reductase] + H2O + H(+). In terms of biological role, cytochromes P450 are a group of heme-thiolate monooxygenases. In liver microsomes, this enzyme is involved in an NADPH-dependent electron transport pathway. It oxidizes a variety of structurally unrelated compounds, including steroids, fatty acids, and xenobiotics. Showed testosterone hydrolase activity. The protein is Cytochrome P450 2C21 (CYP2C21) of Canis lupus familiaris (Dog).